A 182-amino-acid polypeptide reads, in one-letter code: Thioredoxin F-type, chloroplastic (182 aa).

The disordered stretch occupies residues M1–S22. Residues K52–S177 enclose the Thioredoxin domain. Active-site nucleophile residues include C102 and C105. C102 and C105 are oxidised to a cystine.

It belongs to the thioredoxin family. Plant F-type subfamily. Forms a complex with heterodimeric ferredoxin-thioredoxin reductase (FTR) and ferredoxin.

It localises to the plastid. It is found in the chloroplast. Its function is as follows. Participates in various redox reactions through the reversible oxidation of the active center dithiol to a disulfide. The F form is known to activate a number of enzymes of the photosynthetic carbon cycle. The sequence is that of Thioredoxin F-type, chloroplastic (TRXF) from Brassica napus (Rape).